Consider the following 619-residue polypeptide: Alpha-L-arabinofuranosidase C (619 aa).

Residues 1 to 37 (MINHNKTPNILAKVFKRTCGLVSTGAALAILSQAASA) form the signal peptide. In terms of domain architecture, CBM2 spans 38-136 (ACTYTIDSEW…TVTGAACNSA (99 aa)). C39 and C133 are disulfide-bonded. One can recognise a CBM6 domain in the interval 163-289 (LLQEAQAGFC…LPNIDSLSVV (127 aa)). Residues 300 to 319 (SVSSSSSVQSSSSSSSTPSQ) form a disordered region.

This sequence belongs to the glycosyl hydrolase 62 family.

The protein resides in the secreted. The catalysed reaction is Hydrolysis of terminal non-reducing alpha-L-arabinofuranoside residues in alpha-L-arabinosides.. It participates in glycan metabolism; hemicellulose degradation. Functionally, xylanase C contributes to hydrolyze hemicellulose, the major component of plant cell-walls. In Cellvibrio japonicus (strain Ueda107) (Pseudomonas fluorescens subsp. cellulosa), this protein is Alpha-L-arabinofuranosidase C (xynC).